The chain runs to 1079 residues: BRD4-interacting chromatin-remodeling complex-associated protein-like (1079 aa).

2 disordered regions span residues N51 to S79 and L509 to T604. Positions L68–S79 are enriched in low complexity. Residues S544–R576 are compositionally biased toward polar residues. Residues S590 to T604 are compositionally biased toward low complexity. Position 623 is a phosphoserine (S623). Disordered regions lie at residues E669–K691, T837–Q877, and T917–K954. Basic and acidic residues-rich tracts occupy residues S918 to L928 and E938 to E952. At S980 the chain carries Phosphoserine.

Component of the multiprotein chromatin-remodeling complexes SWI/SNF: SWI/SNF-A (BAF), SWI/SNF-B (PBAF) and related complexes. The canonical complex contains a catalytic subunit (either SMARCA4/BRG1/BAF190A or SMARCA2/BRM/BAF190B) and at least SMARCE1, ACTL6A/BAF53, SMARCC1/BAF155, SMARCC2/BAF170, and SMARCB1/SNF5/BAF47. Other subunits specific to each of the complexes may also be present permitting several possible combinations developmentally and tissue specific. Component of the SWI/SNF (GBAF) subcomplex, which includes at least BICRA or BICRAL (mutually exclusive), BRD9, SS18, the core BAF subunits, SMARCA2/BRM, SMARCA4/BRG1/BAF190A, ACTL6A/BAF53, SMARCC1/BAF155, and SMARCD1/BAF60A.

Component of SWI/SNF chromatin remodeling subcomplex GBAF that carries out key enzymatic activities, changing chromatin structure by altering DNA-histone contacts within a nucleosome in an ATP-dependent manner. In Homo sapiens (Human), this protein is BRD4-interacting chromatin-remodeling complex-associated protein-like.